The sequence spans 281 residues: Phosphonates import ATP-binding protein PhnC 2 (281 aa).

In terms of domain architecture, ABC transporter spans 4–238; it reads LTVDNVTKTY…LVDDLYGNVE (235 aa). Residue 35 to 42 participates in ATP binding; it reads GESGAGKS. The segment at 243–281 is disordered; the sequence is ATDNSDNSTVDTSDGTRYDTETGSDGTDEVDVIGRQVES. The segment covering 244-255 has biased composition (low complexity); the sequence is TDNSDNSTVDTS.

This sequence belongs to the ABC transporter superfamily. Phosphonates importer (TC 3.A.1.9.1) family. In terms of assembly, the complex is composed of two ATP-binding proteins (PhnC), two transmembrane proteins (PhnE) and a solute-binding protein (PhnD).

It localises to the cell membrane. The enzyme catalyses phosphonate(out) + ATP + H2O = phosphonate(in) + ADP + phosphate + H(+). In terms of biological role, part of the ABC transporter complex PhnCDE involved in phosphonates import. Responsible for energy coupling to the transport system. The chain is Phosphonates import ATP-binding protein PhnC 2 from Haloquadratum walsbyi (strain DSM 16790 / HBSQ001).